Consider the following 176-residue polypeptide: Oligoribonuclease (176 aa).

Residues 2–159 form the Exonuclease domain; the sequence is EMTGLNPETD…DDILESIEEM (158 aa). Tyr-117 is a catalytic residue.

The protein belongs to the oligoribonuclease family.

The protein localises to the cytoplasm. Functionally, 3'-to-5' exoribonuclease specific for small oligoribonucleotides. This Neisseria gonorrhoeae (strain ATCC 700825 / FA 1090) protein is Oligoribonuclease.